The chain runs to 417 residues: Glutamyl-tRNA(Gln) amidotransferase subunit D (417 aa).

The Asparaginase/glutaminase domain occupies 73–400 (EKVWLLATGG…EEVPRVLTTP (328 aa)). Active-site residues include threonine 83, threonine 157, aspartate 158, and lysine 236.

Belongs to the asparaginase 1 family. GatD subfamily. In terms of assembly, heterodimer of GatD and GatE.

It catalyses the reaction L-glutamyl-tRNA(Gln) + L-glutamine + ATP + H2O = L-glutaminyl-tRNA(Gln) + L-glutamate + ADP + phosphate + H(+). Allows the formation of correctly charged Gln-tRNA(Gln) through the transamidation of misacylated Glu-tRNA(Gln) in organisms which lack glutaminyl-tRNA synthetase. The reaction takes place in the presence of glutamine and ATP through an activated gamma-phospho-Glu-tRNA(Gln). The GatDE system is specific for glutamate and does not act on aspartate. This is Glutamyl-tRNA(Gln) amidotransferase subunit D from Pyrobaculum aerophilum (strain ATCC 51768 / DSM 7523 / JCM 9630 / CIP 104966 / NBRC 100827 / IM2).